A 225-amino-acid polypeptide reads, in one-letter code: Small ribosomal subunit protein uS7 (225 aa).

N-acetylserine is present on S2. A Phosphothreonine modification is found at T27. Residues K45 and K203 each participate in a glycyl lysine isopeptide (Lys-Gly) (interchain with G-Cter in ubiquitin) cross-link.

It belongs to the universal ribosomal protein uS7 family. Component of the small ribosomal subunit (SSU). Mature yeast ribosomes consist of a small (40S) and a large (60S) subunit. The 40S small subunit contains 1 molecule of ribosomal RNA (18S rRNA) and 33 different proteins (encoded by 57 genes). The large 60S subunit contains 3 rRNA molecules (25S, 5.8S and 5S rRNA) and 46 different proteins (encoded by 81 genes). In terms of processing, N-terminally acetylated by acetyltransferase NatA.

Its subcellular location is the cytoplasm. Its function is as follows. Component of the ribosome, a large ribonucleoprotein complex responsible for the synthesis of proteins in the cell. The small ribosomal subunit (SSU) binds messenger RNAs (mRNAs) and translates the encoded message by selecting cognate aminoacyl-transfer RNA (tRNA) molecules. The large subunit (LSU) contains the ribosomal catalytic site termed the peptidyl transferase center (PTC), which catalyzes the formation of peptide bonds, thereby polymerizing the amino acids delivered by tRNAs into a polypeptide chain. The nascent polypeptides leave the ribosome through a tunnel in the LSU and interact with protein factors that function in enzymatic processing, targeting, and the membrane insertion of nascent chains at the exit of the ribosomal tunnel. The polypeptide is Small ribosomal subunit protein uS7 (Saccharomyces cerevisiae (strain ATCC 204508 / S288c) (Baker's yeast)).